The sequence spans 197 residues: Caspase recruitment domain-containing protein 16 (197 aa).

The CARD domain maps to 1–91 (MADKVLKEKR…YLAETLGLSA (91 aa)).

As to quaternary structure, homooligomer. Interacts with CASP1, CASP4, CARD8 and RIPK2. As to expression, widely expressed. Expressed at higher level in placenta, spleen, lymph node and bone marrow. Weakly or not expressed in thymus.

Caspase inhibitor. Acts as a regulator of procaspase-1/CASP1 activation implicated in the regulation of the proteolytic maturation of pro-interleukin-1 beta (IL1B) and its release during inflammation. Inhibits the release of IL1B in response to LPS in monocytes. Also induces NF-kappa-B activation during the pro-inflammatory cytokine response. Also able to inhibit CASP1-mediated neuronal cell death, TNF-alpha, hypoxia-, UV-, and staurosporine-mediated cell death but not ER stress-mediated cell death. Acts by preventing activation of caspases CASP1 and CASP4, possibly by preventing the interaction between CASP1 and RIPK2. The sequence is that of Caspase recruitment domain-containing protein 16 (CARD16) from Homo sapiens (Human).